A 167-amino-acid chain; its full sequence is Crossover junction endodeoxyribonuclease RuvC (167 aa).

Catalysis depends on residues aspartate 11, glutamate 71, and aspartate 143. Mg(2+)-binding residues include aspartate 11, glutamate 71, and aspartate 143.

It belongs to the RuvC family. Homodimer which binds Holliday junction (HJ) DNA. The HJ becomes 2-fold symmetrical on binding to RuvC with unstacked arms; it has a different conformation from HJ DNA in complex with RuvA. In the full resolvosome a probable DNA-RuvA(4)-RuvB(12)-RuvC(2) complex forms which resolves the HJ. The cofactor is Mg(2+).

It is found in the cytoplasm. It carries out the reaction Endonucleolytic cleavage at a junction such as a reciprocal single-stranded crossover between two homologous DNA duplexes (Holliday junction).. Its function is as follows. The RuvA-RuvB-RuvC complex processes Holliday junction (HJ) DNA during genetic recombination and DNA repair. Endonuclease that resolves HJ intermediates. Cleaves cruciform DNA by making single-stranded nicks across the HJ at symmetrical positions within the homologous arms, yielding a 5'-phosphate and a 3'-hydroxyl group; requires a central core of homology in the junction. The consensus cleavage sequence is 5'-(A/T)TT(C/G)-3'. Cleavage occurs on the 3'-side of the TT dinucleotide at the point of strand exchange. HJ branch migration catalyzed by RuvA-RuvB allows RuvC to scan DNA until it finds its consensus sequence, where it cleaves and resolves the cruciform DNA. The protein is Crossover junction endodeoxyribonuclease RuvC of Acidiphilium cryptum (strain JF-5).